The chain runs to 337 residues: Large ribosomal subunit protein uL3 (337 aa).

Positions 1–20 (MASIHRPKRGSLAFSPRKRA) are disordered.

Belongs to the universal ribosomal protein uL3 family. Part of the 50S ribosomal subunit. Forms a cluster with proteins L14 and L24e.

Functionally, one of the primary rRNA binding proteins, it binds directly near the 3'-end of the 23S rRNA, where it nucleates assembly of the 50S subunit. This chain is Large ribosomal subunit protein uL3, found in Methanosarcina acetivorans (strain ATCC 35395 / DSM 2834 / JCM 12185 / C2A).